An 88-amino-acid chain; its full sequence is Large ribosomal subunit protein bL27 (88 aa).

Positions 1 to 26 (MAHKKGASSSSNGRDSEAKRLGVKRF) are disordered.

It belongs to the bacterial ribosomal protein bL27 family.

In Corynebacterium glutamicum (strain R), this protein is Large ribosomal subunit protein bL27.